Here is a 58-residue protein sequence, read N- to C-terminus: uncharacterized protein (58 aa).

4Fe-4S ferredoxin-type domains lie at 2–27 and 28–57; these read GIKILEKCVGCGNCVVFCPRRAIKTY and GVAIVDENKCSNCGICARYCPINAIKVDTS. [4Fe-4S] cluster contacts are provided by Cys9, Cys12, Cys15, Cys19, Cys37, Cys40, Cys43, and Cys47.

[4Fe-4S] cluster is required as a cofactor.

Functionally, ferredoxins are iron-sulfur proteins that transfer electrons probably in the CO-dehydrogenase complex. This is an uncharacterized protein from Methanocaldococcus jannaschii (strain ATCC 43067 / DSM 2661 / JAL-1 / JCM 10045 / NBRC 100440) (Methanococcus jannaschii).